Reading from the N-terminus, the 415-residue chain is Nacrein-like protein C2 (415 aa).

An N-linked (GlcNAc...) asparagine glycan is attached at N27. The Alpha-carbonic anhydrase domain maps to 33–414 (AGFSYDRSIC…KNKVTVYKSF (382 aa)). Residues H132, H134, and H157 each contribute to the Zn(2+) site. Residues 201 to 297 (DEPDDEECKH…GENGHKHGCR (97 aa)) are disordered. Residues 207-219 (ECKHILKGHHPDN) are compositionally biased toward basic and acidic residues. Residues 220–289 (NENGNGDNGN…NNGENGNNGE (70 aa)) show a composition bias toward low complexity. A run of 22 repeats spans residues 225-227 (GDN), 228-230 (GNN), 231-233 (GYN), 234-236 (GDN), 237-239 (GNN), 240-242 (GDN), 243-245 (GNN), 246-248 (GYN), 249-251 (GDN), 252-254 (GNN), 255-257 (GVN), 258-260 (GNN), 261-263 (GYN), 264-266 (GDN), 267-269 (GNN), 270-272 (GDN), 273-275 (GNN), 276-278 (GEN), 279-281 (GNN), 282-284 (GEN), 285-286 (GN), and 288-290 (GEN). The interval 225-290 (GDNGNNGYNG…NGENGNNGEN (66 aa)) is 27 X 3 AA approximate tandem repeats of G-X-N. 355–356 (TT) is a binding site for substrate.

This sequence belongs to the alpha-carbonic anhydrase family. In terms of assembly, homooligomer; disulfide-linked. May also be disulfide-linked to insoluble organic matrix. It depends on Zn(2+) as a cofactor. In terms of tissue distribution, expressed in the mantle.

Its subcellular location is the secreted. It localises to the extracellular space. The protein resides in the extracellular matrix. It catalyses the reaction hydrogencarbonate + H(+) = CO2 + H2O. Acts as a negative regulator for calcification in the shells of mollusks. May function both as a calcium concentrator and as a carbonic anhydrase required for production of carbonate ions, which are assembled to CaCO(3) at mineralization sites. Is important for shell formation in both the calcitic prismatic layer and the aragonitic nacreous layer. Shows inhibitory activity of crystal formation when present in free state but, when attached to the insoluble matrix, may regulate the form and size of aragonite crystal. The protein is Nacrein-like protein C2 of Crassostrea nippona (Iwagaki oyster).